Reading from the N-terminus, the 162-residue chain is Interleukin-15 (162 aa).

The N-terminal stretch at 1 to 29 is a signal peptide; that stretch reads MRILKPYLRSTSIQCYLCLLLNSHFLTEA. Positions 30-48 are excised as a propeptide; it reads CIPVFILSCINAGLPKTEA. Intrachain disulfides connect Cys83–Cys133 and Cys90–Cys136. 2 N-linked (GlcNAc...) asparagine glycosylation sites follow: Asn104 and Asn127.

Belongs to the IL-15/IL-21 family.

The protein localises to the secreted. Its function is as follows. Cytokine that plays a major role in the development of inflammatory and protective immune responses to microbial invaders and parasites by modulating immune cells of both the innate and adaptive immune systems. Stimulates the proliferation of natural killer cells, T-cells and B-cells and promotes the secretion of several cytokines. In monocytes, induces the production of IL8 and monocyte chemotactic protein 1/CCL2, two chemokines that attract neutrophils and monocytes respectively to sites of infection. Unlike most cytokines, which are secreted in soluble form, IL15 is expressed in association with its high affinity IL15RA on the surface of IL15-producing cells and delivers signals to target cells that express IL2RB and IL2RG receptor subunits. Binding to its receptor triggers the phosphorylation of JAK1 and JAK3 and the recruitment and subsequent phosphorylation of signal transducer and activator of transcription-3/STAT3 and STAT5. In mast cells, induces the rapid tyrosine phosphorylation of STAT6 and thereby controls mast cell survival and release of cytokines such as IL4. In Felis catus (Cat), this protein is Interleukin-15 (IL15).